The sequence spans 3253 residues: tRNA nuclease CdiA (3253 aa).

The N-terminal stretch at 1-32 (MHQPPVRFPYRLLSYLISTIIAGQPLLPAVGA) is a signal peptide. The tract at residues 36–322 (PQNGAGMDKA…AGGNLSVTGT (287 aa)) is two-partner system transport domain (TPS). Positions 351-1384 (GELTAGQNAM…ITIRTGHLLN (1034 aa)) are FHA-1. Residues 1385–1656 (QREGINETKS…DLASGIVEGN (272 aa)) form a receptor binding domain (RBD) region. Residues 1657–1841 (YPLPSGNNGY…LSPKDVTLQN (185 aa)) form a YP domain region. The interval 1842 to 1902 (GSIISGQNVH…GLKAMGDINN (61 aa)) is periplasmic FHA-1 repeat (pFR). The tract at residues 1944-2548 (TYTGSIASVS…TSKYDSKQTS (605 aa)) is FHA-2. 4 disordered regions span residues 2228-2252 (GSSK…TIGS), 2362-2410 (TGDP…GKNR), 2483-2503 (GSEK…GKTV), and 2687-2712 (IRDR…DSIS). Composition is skewed to polar residues over residues 2240–2252 (GTTQ…TIGS), 2368–2403 (TGVS…NLSV), and 2490–2503 (TEWT…GKTV). Positions 2888-2930 (SDLSEEQKQTISTLATVSAGLAGGLTGNSSASAAVGAQSGKNA) are pretoxin (PT) domain. The VDNN CT cleavage motif signature appears at 2931 to 2934 (VDNN). The segment at 2931–3253 (VDNNYLSVSE…TGIVSNFHPK (323 aa)) is C-terminal effector domain (CT).

This sequence in the N-terminal section; belongs to the CdiA toxin family. The protein in the C-terminal section; belongs to the bacterial EndoU family. In terms of assembly, forms a 1:1 complex with cognate immunity protein CdiI-STECO31. TRNase activity is metal-independent. is required as a cofactor. In terms of processing, the CT domain is cleaved upon binding to receptor Tsx on target cells.

The protein localises to the secreted. Its subcellular location is the target cell. It localises to the target cell cytoplasm. Toxic component of a toxin-immunity protein module, which functions as a cellular contact-dependent growth inhibition (CDI) system. CDI modules allow bacteria to communicate with and inhibit the growth of closely related neighboring target bacteria in a contact-dependent fashion (target cell counts decrease 1000- to 10000-fold with this CDI). Uses outer membrane nucleoside transporter Tsx on target cells as a receptor. Gains access to the cytoplasm of target cells by using integral inner membrane protein PTS system glucose-specific EIICB component (ptsG). Targeting of the C-terminal domain (CT) domain (residues 2931-3253) in the absence of immunity protein inhibits cell growth and causes tRNA(UUC-Glu) cleavage; expression of cognate immunity protein CdiI-STECO31 neutralizes growth inhibition leaving tRNA(UUC-Glu) is intact, whereas non-cognate immunity proteins do not confer protection. The CT domain cleaves tRNA; it is most active against tRNA(UUC-Glu), but also has modest activity against tRNA(GUC-Asp), tRNA(UUG-Gln), tRNA(CCC-Gly), tRNA(UCC-Gly), tRNA(GCC-Gly), tRNA(UUU-Lys), tRNA(GGU-Thr) and tRNA(CCA-Trp); tRNA cleavage is inhibited by cognate immunity protein CdiI. Cleavage of tRNA(UUC-Glu) occurs in the anticodon loop between cytosine(37) and 2-methyladenosine(38) (C37-m2A38) and probably also occurs in the anticodon loop of other tRNAs as well. Its function is as follows. The CdiA protein is thought to be exported from the cell through the central lumen of CdiB, the other half of its two-partner system (TPS). The TPS domain probably remains associated with CdiB while the FHA-1 domain forms an extended filament (33 nm long) with the receptor-binding domain (RBD) at its extremity; in the secretion arrested state the C-terminus of the RBD and YP domains form a hairpin-like structure as the FHA-2, PT and CT domains are periplasmic. The YP domain is probably responsible for this arrest at the point where it re-enters the host cell periplasm. Upon binding to a target cell outer membrane receptor (Tsx for this CDI) a signal is transmitted to activate secretion. The filament becomes about 5 nm longer, the rest of CdiA is secreted and the FHA-2 domain becomes stably associated with the target cell's outer membrane where it facilitates entry of the toxic CT domain into the target cell periplasm. From there the toxic CT domain is cleaved and gains access to the target cell cytoplasm via an inner membrane protein (PTS system glucose-specific EIICB component, ptsG for this CDI). The polypeptide is tRNA nuclease CdiA (Escherichia coli (strain STEC_O31)).